The primary structure comprises 238 residues: Small ribosomal subunit protein uS2 (238 aa).

The protein belongs to the universal ribosomal protein uS2 family.

In Haemophilus ducreyi (strain 35000HP / ATCC 700724), this protein is Small ribosomal subunit protein uS2.